A 360-amino-acid chain; its full sequence is Peptide chain release factor 1 (360 aa).

At glutamine 235 the chain carries N5-methylglutamine.

The protein belongs to the prokaryotic/mitochondrial release factor family. Post-translationally, methylated by PrmC. Methylation increases the termination efficiency of RF1.

The protein localises to the cytoplasm. Its function is as follows. Peptide chain release factor 1 directs the termination of translation in response to the peptide chain termination codons UAG and UAA. This is Peptide chain release factor 1 from Leptothrix cholodnii (strain ATCC 51168 / LMG 8142 / SP-6) (Leptothrix discophora (strain SP-6)).